A 217-amino-acid chain; its full sequence is Octanoyltransferase (217 aa).

A BPL/LPL catalytic domain is found at 32 to 207 (SESHDELWIV…TFSQLLGYQH (176 aa)). Substrate is bound by residues 71 to 78 (RGGQVTYH), 138 to 140 (SLG), and 151 to 153 (GLA). Cys-169 acts as the Acyl-thioester intermediate in catalysis.

The protein belongs to the LipB family.

The protein resides in the cytoplasm. The enzyme catalyses octanoyl-[ACP] + L-lysyl-[protein] = N(6)-octanoyl-L-lysyl-[protein] + holo-[ACP] + H(+). It functions in the pathway protein modification; protein lipoylation via endogenous pathway; protein N(6)-(lipoyl)lysine from octanoyl-[acyl-carrier-protein]: step 1/2. Its function is as follows. Catalyzes the transfer of endogenously produced octanoic acid from octanoyl-acyl-carrier-protein onto the lipoyl domains of lipoate-dependent enzymes. Lipoyl-ACP can also act as a substrate although octanoyl-ACP is likely to be the physiological substrate. The chain is Octanoyltransferase from Shewanella baltica (strain OS223).